A 79-amino-acid polypeptide reads, in one-letter code: Translational regulator CsrA (79 aa).

The protein belongs to the CsrA/RsmA family. Homodimer; the beta-strands of each monomer intercalate to form a hydrophobic core, while the alpha-helices form wings that extend away from the core.

The protein resides in the cytoplasm. In terms of biological role, a translational regulator that binds mRNA to regulate translation initiation and/or mRNA stability. Usually binds in the 5'-UTR at or near the Shine-Dalgarno sequence preventing ribosome-binding, thus repressing translation. Its main target seems to be the major flagellin gene, while its function is anatagonized by FliW. This is Translational regulator CsrA from Geobacter sulfurreducens (strain ATCC 51573 / DSM 12127 / PCA).